The primary structure comprises 211 residues: Late expression factor 7 (211 aa).

Functionally, involved in late/very late gene activation. The chain is Late expression factor 7 (LEF-7) from Orgyia pseudotsugata multicapsid polyhedrosis virus (OpMNPV).